The chain runs to 421 residues: Testin (421 aa).

Residues 92 to 199 (MILTNPVAAK…GDVKLPCEMD (108 aa)) enclose the PET domain. The tract at residues 133–164 (EKQPVAGSEGAQYRKKQLAKQLPAHDQDPSKC) is disordered. Positions 155-164 (PAHDQDPSKC) are enriched in basic and acidic residues. 3 consecutive LIM zinc-binding domains span residues 234–297 (YFCY…CDSE), 299–359 (PRCA…NHAV), and 362–421 (QGCH…KMMS).

This sequence belongs to the prickle / espinas / testin family. Interacts via LIM domain 1 with ZYX. Interacts (via LIM domain 3) with ENAH and VASP. Interacts with ALKBH4, talin, actin, alpha-actinin, GRIP1 and PXN. Interacts (via LIM domain 2) with ACTL7A (via N-terminus). Heterodimer with ACTL7A; the heterodimer interacts with ENAH to form a heterotrimer.

The protein localises to the cytoplasm. It is found in the cell junction. Its subcellular location is the focal adhesion. In terms of biological role, scaffold protein that may play a role in cell adhesion, cell spreading and in the reorganization of the actin cytoskeleton. Plays a role in the regulation of cell proliferation. May act as a tumor suppressor. This is Testin (TES) from Plecturocebus moloch (Dusky titi monkey).